A 45-amino-acid polypeptide reads, in one-letter code: Bomanin Short 2 (45 aa).

The signal sequence occupies residues 1–20 (MKFFSVVTVFVFGLLALANA). The propeptide at 21–27 (VPLSPDP) is removed by a dipeptidylpeptidase. Residues Cys36 and Cys39 are joined by a disulfide bond. At Gly43 the chain carries Glycine amide.

Hemolymph (at protein level).

It localises to the secreted. Secreted immune-induced peptide induced by Toll signaling. Has a role in resistance to bacterial and fungal infections. The protein is Bomanin Short 2 of Drosophila melanogaster (Fruit fly).